Consider the following 156-residue polypeptide: 2-C-methyl-D-erythritol 2,4-cyclodiphosphate synthase (156 aa).

A divalent metal cation is bound by residues Asp9 and His11. Residues 9 to 11 (DAH) and 35 to 36 (HS) each bind 4-CDP-2-C-methyl-D-erythritol 2-phosphate. His43 provides a ligand contact to a divalent metal cation. 57–59 (DIG) contacts 4-CDP-2-C-methyl-D-erythritol 2-phosphate.

Belongs to the IspF family. In terms of assembly, homotrimer. It depends on a divalent metal cation as a cofactor.

The enzyme catalyses 4-CDP-2-C-methyl-D-erythritol 2-phosphate = 2-C-methyl-D-erythritol 2,4-cyclic diphosphate + CMP. Its pathway is isoprenoid biosynthesis; isopentenyl diphosphate biosynthesis via DXP pathway; isopentenyl diphosphate from 1-deoxy-D-xylulose 5-phosphate: step 4/6. Its function is as follows. Involved in the biosynthesis of isopentenyl diphosphate (IPP) and dimethylallyl diphosphate (DMAPP), two major building blocks of isoprenoid compounds. Catalyzes the conversion of 4-diphosphocytidyl-2-C-methyl-D-erythritol 2-phosphate (CDP-ME2P) to 2-C-methyl-D-erythritol 2,4-cyclodiphosphate (ME-CPP) with a corresponding release of cytidine 5-monophosphate (CMP). This Hydrogenobaculum sp. (strain Y04AAS1) protein is 2-C-methyl-D-erythritol 2,4-cyclodiphosphate synthase.